A 365-amino-acid chain; its full sequence is Putative F-box protein At1g31000 (365 aa).

An F-box domain is found at N15 to F62.

This is Putative F-box protein At1g31000 from Arabidopsis thaliana (Mouse-ear cress).